Here is a 278-residue protein sequence, read N- to C-terminus: Ras-related protein Rab-40B (278 aa).

GTP contacts are provided by Ser23, Gly26, and Lys27. The switch-I stretch occupies residues 41–49 (SPYGHPAGI). Position 69 (Asp69) interacts with Mg(2+). Residues Gly72, Asn126, and Arg127 each coordinate GTP. A switch-II region spans residues 72–88 (GQGRFCTIFRSYSRGAQ). The SOCS box domain occupies 175-228 (LLRHGMDRLWRPSKVLSLQELCCRAVVSCTPGHLVDKLPLPVALRSHLKSFSMA). The tract at residues 245 to 278 (ANSSHKRNSFRKVRTIRPPQSPPRNCARNSCKIS) is disordered. The span at 248–259 (SHKRNSFRKVRT) shows a compositional bias: basic residues. Cys270 carries S-palmitoyl cysteine lipidation. Cys275 is lipidated: S-geranylgeranyl cysteine.

It belongs to the small GTPase superfamily. Rab family. As to quaternary structure, component of the cullin-5-RING E3 ubiquitin-protein ligase complex (ECS(RAB40B) complex) composed of CUL5, Elongin BC (ELOB and ELOC), RNF7/RBX2 and RAB40B; RAB40B interaction with ECS complex is GTP-independent. Binds (GTP-bound) LIMA1; interaction promotes LIMA1 subcellular localization in lamellipodia during cell migration. Interacts (GTP-bound) with TKS5/SH3PXD2A (via PX domain); interaction promotes invadopodia-mediated extracellular matrix degradation. It depends on Mg(2+) as a cofactor.

The protein localises to the cell membrane. It is found in the cytoplasm. The protein resides in the cytosol. It localises to the cell projection. Its subcellular location is the lamellipodium membrane. The protein localises to the ruffle. It carries out the reaction GTP + H2O = GDP + phosphate + H(+). It functions in the pathway protein modification; protein ubiquitination. With respect to regulation, regulated by guanine nucleotide exchange factors (GEFs) which promote the exchange of bound GDP for free GTP. Regulated by GTPase activating proteins (GAPs) which increase the GTP hydrolysis activity. Inhibited by GDP dissociation inhibitors (GDIs). Functionally, RAB40B small GTPase acts as substrate-recognition components of the ECS(RAB40B) E3 ubiquitin ligase complex which mediates the ubiquitination of target proteins. The Rab40 subfamily belongs to the Rab family that are key regulators of intracellular membrane trafficking, from the formation of transport vesicles to their fusion with membranes. Rabs cycle between an inactive GDP-bound form and an active GTP-bound form that is able to recruit to membranes different sets of downstream effectors directly responsible for vesicle formation, movement, tethering and fusion. As part of the ECS(RAB40B) complex, GTP-bound RAB40B promotes LIMA1/EPLIN ubiquitination and degradation, thereby regulating leading-edge actin dynamics during cell migration. As part of the ECS(RAB40B) complex, GTP-bound RAB40B also ubiquitinates RAP2A GTPase which promotes its localization to lamellipodia and activation to drive cell migration. The ECS(RAB40B) complex does not mediate canonical ubiquitin-dependent degradation of RAP2. RAB40B also binds TKS5/SH3PXD2A effector independently from ECS complex to promote invadopodia-mediated extracellular matrix degradation. The protein is Ras-related protein Rab-40B of Mus musculus (Mouse).